The primary structure comprises 152 residues: SKP1-like protein 8 (152 aa).

The tract at residues 94-152 is interaction with the F-box domain of F-box proteins; that stretch reads TNAANFLNNKSLLHLAGQTVADMIKGNTPKQMREFFNIENDLTPEEEAAIRRENKWAFE.

The protein belongs to the SKP1 family. Part of a SCF (SKP1-cullin-F-box) protein ligase complex. Restricted to siliques.

It localises to the nucleus. Its pathway is protein modification; protein ubiquitination. In terms of biological role, involved in ubiquitination and subsequent proteasomal degradation of target proteins. Together with CUL1, RBX1 and a F-box protein, it forms a SCF E3 ubiquitin ligase complex. The functional specificity of this complex depends on the type of F-box protein. In the SCF complex, it serves as an adapter that links the F-box protein to CUL1. The polypeptide is SKP1-like protein 8 (ASK8) (Arabidopsis thaliana (Mouse-ear cress)).